A 287-amino-acid chain; its full sequence is MTLLLNTTAKLYIAPRTLPFTSSSTFARSPFLRIPSLLKPLSPLTARVSLSSTMGDSADAGMDAVQRRLMFDDECILVDENDRVVGHDTKYNCHLMEKIEKDNLLHRAFSVFLFNSKYELLLQQRSATKVTFPLVWTNTCCSHPLYRESELIDEESLGARNAAQRKLLDELGIPAEDVPVDQFTPLGRMLYKAPSDGKWGEHELDYLLFIVRDVSVNPNPDEVADIKYVNRDELKELLRKADAGEGGLKLSPWFRLVVDNFLFKWWDHVEKGTLKEVADMKTIHKLT.

Residues 1–51 (MTLLLNTTAKLYIAPRTLPFTSSSTFARSPFLRIPSLLKPLSPLTARVSLS) constitute a chloroplast transit peptide. Lys90 contacts substrate. Residues His94 and His106 each coordinate Mg(2+). A Nudix hydrolase domain is found at 104–256 (LLHRAFSVFL…GLKLSPWFRL (153 aa)). Residues Arg125 and Lys129 each coordinate substrate. Cys141 is a catalytic residue. A substrate-binding site is contributed by Ser142. Positions 142-172 (SHPLYRESELIDEESLGARNAAQRKLLDELG) match the Nudix box motif. Glu201 and Glu203 together coordinate Mg(2+). Glu203 is a catalytic residue.

The protein belongs to the IPP isomerase type 1 family. In terms of assembly, monomer. It depends on Mg(2+) as a cofactor. In terms of tissue distribution, mainly expressed in roots and trichomes and, to a lower extent, in leaves, flowers and stems.

It is found in the plastid. The protein resides in the chloroplast. It carries out the reaction isopentenyl diphosphate = dimethylallyl diphosphate. Its pathway is isoprenoid biosynthesis; dimethylallyl diphosphate biosynthesis; dimethylallyl diphosphate from isopentenyl diphosphate: step 1/1. It participates in porphyrin-containing compound metabolism; chlorophyll biosynthesis. Functionally, catalyzes the 1,3-allylic rearrangement of the homoallylic substrate isopentenyl (IPP) to its highly electrophilic allylic isomer, dimethylallyl diphosphate (DMAPP). The protein is Isopentenyl-diphosphate Delta-isomerase 1, chloroplastic of Cannabis sativa (Hemp).